Consider the following 443-residue polypeptide: Chromosome partition protein MukF (443 aa).

The interval 209–237 (LDETSGNLRELQDTLNAAGDKLQAQLLRI) is leucine-zipper.

It belongs to the MukF family. Interacts, and probably forms a ternary complex, with MukE and MukB via its C-terminal region. The complex formation is stimulated by calcium or magnesium. It is required for an interaction between MukE and MukB.

The protein localises to the cytoplasm. Its subcellular location is the nucleoid. Involved in chromosome condensation, segregation and cell cycle progression. May participate in facilitating chromosome segregation by condensation DNA from both sides of a centrally located replisome during cell division. Not required for mini-F plasmid partitioning. Probably acts via its interaction with MukB and MukE. Overexpression results in anucleate cells. It has a calcium binding activity. This Actinobacillus pleuropneumoniae serotype 5b (strain L20) protein is Chromosome partition protein MukF.